Here is a 162-residue protein sequence, read N- to C-terminus: uncharacterized protein (162 aa).

Positions 1–21 are cleaved as a signal peptide; the sequence is MRLCGLLIFLSYIVYVDNAVT.

This is an uncharacterized protein from Caenorhabditis elegans.